A 73-amino-acid chain; its full sequence is Metallothionein-like protein type 2 (73 aa).

This sequence belongs to the metallothionein superfamily. Type 15 family.

Functionally, metallothioneins have a high content of cysteine residues that bind various heavy metals. The protein is Metallothionein-like protein type 2 of Solanum lycopersicum (Tomato).